Here is an 846-residue protein sequence, read N- to C-terminus: Protein arginine N-methyltransferase 9 (846 aa).

TPR repeat units follow at residues valine 25 to leucine 58, glutamine 67 to aspartate 100, and glutamate 101 to phenylalanine 134. 2 consecutive SAM-dependent MTase PRMT-type domains span residues alanine 137–isoleucine 466 and asparagine 530–proline 846.

It belongs to the class I-like SAM-binding methyltransferase superfamily. Protein arginine N-methyltransferase family. As to quaternary structure, found in a complex with PRMT9, SF3B2 and SF3B4. Interacts with SF3B2.

It localises to the cytoplasm. The catalysed reaction is L-arginyl-[protein] + 2 S-adenosyl-L-methionine = N(omega),N(omega)'-dimethyl-L-arginyl-[protein] + 2 S-adenosyl-L-homocysteine + 2 H(+). Functionally, arginine methyltransferase that can both catalyze the formation of omega-N monomethylarginine (MMA) and symmetrical dimethylarginine (sDMA). Specifically mediates the symmetrical dimethylation of SF3B2. Involved in the regulation of alternative splicing of pre-mRNA. This is Protein arginine N-methyltransferase 9 (Prmt9) from Mus musculus (Mouse).